Reading from the N-terminus, the 202-residue chain is CASP-like protein 2B2 (202 aa).

Residues M1–R29 are Cytoplasmic-facing. The helical transmembrane segment at L30–V50 threads the bilayer. Over G51–K72 the chain is Extracellular. Residues A73–V93 form a helical membrane-spanning segment. The Cytoplasmic portion of the chain corresponds to R94–D118. A helical transmembrane segment spans residues Q119–A139. Residues K140–E164 lie on the Extracellular side of the membrane. The chain crosses the membrane as a helical span at residues G165–F185. At S186–W202 the chain is on the cytoplasmic side.

It belongs to the Casparian strip membrane proteins (CASP) family. As to quaternary structure, homodimer and heterodimers.

It localises to the cell membrane. The sequence is that of CASP-like protein 2B2 from Populus trichocarpa (Western balsam poplar).